Here is a 128-residue protein sequence, read N- to C-terminus: Large ribosomal subunit protein bL12 (128 aa).

Belongs to the bacterial ribosomal protein bL12 family. As to quaternary structure, homodimer. Part of the ribosomal stalk of the 50S ribosomal subunit. Forms a multimeric L10(L12)X complex, where L10 forms an elongated spine to which 2 to 4 L12 dimers bind in a sequential fashion. Binds GTP-bound translation factors.

In terms of biological role, forms part of the ribosomal stalk which helps the ribosome interact with GTP-bound translation factors. Is thus essential for accurate translation. The sequence is that of Large ribosomal subunit protein bL12 from Streptomyces antibioticus.